The sequence spans 187 residues: MAKEEYVSRMLVMLIMIMPLVAQGSRLHSWANRLEETGKDKVTNLQFYFHDTLSGKNPTAVKVAQGTDTEKSPTLFGAVFMVDDALTETADPKSKLVGRAQGLYGSSCKEEVGLIMAMSFCFEDGPYKDSTISMIGKNSAMNPIREMPIVGGTGMFRMARGYAIARTNWFDPKTGDAIVGYNVTIMH.

An N-terminal signal peptide occupies residues 1–24; sequence MAKEEYVSRMLVMLIMIMPLVAQG. Asparagine 182 carries N-linked (GlcNAc...) asparagine glycosylation.

This sequence belongs to the plant dirigent protein family. As to quaternary structure, homodimer.

The protein localises to the secreted. It localises to the extracellular space. Its subcellular location is the apoplast. Functionally, dirigent proteins impart stereoselectivity on the phenoxy radical-coupling reaction, yielding optically active lignans from two molecules of coniferyl alcohol in the biosynthesis of lignans, flavonolignans, and alkaloids and thus plays a central role in plant secondary metabolism. This chain is Dirigent protein 23 (DIR23), found in Arabidopsis thaliana (Mouse-ear cress).